The following is a 421-amino-acid chain: Diaminobutyrate--2-oxoglutarate transaminase (421 aa).

At K267 the chain carries N6-(pyridoxal phosphate)lysine.

Belongs to the class-III pyridoxal-phosphate-dependent aminotransferase family. In terms of assembly, homohexamer. Pyridoxal 5'-phosphate serves as cofactor.

It carries out the reaction L-2,4-diaminobutanoate + 2-oxoglutarate = L-aspartate 4-semialdehyde + L-glutamate. It functions in the pathway amine and polyamine biosynthesis; ectoine biosynthesis; L-ectoine from L-aspartate 4-semialdehyde: step 1/3. Catalyzes reversively the conversion of L-aspartate beta-semialdehyde (ASA) to L-2,4-diaminobutyrate (DABA) by transamination with L-glutamate. Seems to use L-glutamate specifically as the amino group donor to ASA, as it is not active with L-alanine, L-glutamine, L-aspartate and L-lysine, and is only poorly active with L-homoserine. In the reverse reaction, gamma-aminobutyric acid (GABA) and L-ornithine can also be used as amino group donors to 2-oxoglutarate, but with a reduced activity compared to that with DABA. In Halomonas elongata (strain ATCC 33173 / DSM 2581 / NBRC 15536 / NCIMB 2198 / 1H9), this protein is Diaminobutyrate--2-oxoglutarate transaminase (ectB).